The following is a 243-amino-acid chain: Protein S40-7 (243 aa).

Disordered stretches follow at residues 1 to 68 and 107 to 143; these read MNKN…KSGL and SSTA…ERLP. Polar residues predominate over residues 10-20; it reads SSPSSLATISD. Acidic residues predominate over residues 22–32; the sequence is ADGELNEDDIF. Over residues 47–67 the composition is skewed to polar residues; sequence PVSSPAKQQTPARQLQRSKSG.

The protein belongs to the senescence regulator S40 family.

The protein resides in the cytoplasm. The sequence is that of Protein S40-7 from Arabidopsis thaliana (Mouse-ear cress).